Reading from the N-terminus, the 363-residue chain is Nucleoporin SEH1 (363 aa).

6 WD repeats span residues 15-54 (AHRD…NWRR), 60-101 (CHGG…SEKD), 108-149 (QWIR…RIYE), 158-206 (RWNL…VIYE), 223-264 (DLPC…SAIL), and 287-326 (GDHR…QWVK).

It belongs to the WD repeat SEC13 family. As to quaternary structure, component of the nuclear pore complex (NPC). Probably part of the GATOR complex.

It is found in the nucleus. Its subcellular location is the nuclear pore complex. The protein localises to the lysosome membrane. The protein resides in the nucleus envelope. Functionally, probable component of the nuclear pore complex (NPC) which is involved in the trafficking of macromolecules between the cytoplasm and nucleus. Its function is as follows. As a component of the GATOR complex may function in the amino acid-sensing branch of the TORC1 signaling pathway. This chain is Nucleoporin SEH1, found in Caenorhabditis elegans.